The chain runs to 377 residues: Flagellin (377 aa).

Belongs to the bacterial flagellin family.

It is found in the secreted. The protein resides in the bacterial flagellum. Flagellin is the subunit protein which polymerizes to form the filaments of bacterial flagella. The protein is Flagellin (fla) of Clostridium tyrobutyricum.